A 331-amino-acid chain; its full sequence is High-affinity nickel-transport protein NixA (331 aa).

Transmembrane regions (helical) follow at residues 3–23, 77–97, 110–130, 184–204, 213–233, 259–279, and 302–322; these read LWFPYFLAIVFLHALGLALLF, MGHSSVVILMTIISAFAIAWA, VVGTLVSGLFLLIIGLLNAII, PVGFLFGLGFDTASEIALLAL, VVGMLSLPILFAAGMSLFDTL, ITALSVFIALFIGLIELFQVI, and DLGYYLVGLFVIAFLGSFFLW.

Belongs to the NiCoT transporter (TC 2.A.52) family.

Its subcellular location is the cell inner membrane. High-affinity nickel intake protein. Imports nickel ions in an energy-dependent fashion. Necessary for the expression of catalytically active urease. The sequence is that of High-affinity nickel-transport protein NixA (nixA) from Helicobacter pylori (strain J99 / ATCC 700824) (Campylobacter pylori J99).